The sequence spans 358 residues: 4-diphosphocytidyl-2-C-methyl-D-erythritol kinase (358 aa).

Lys-24 is a catalytic residue. 138-148 (PVAGGMAGGSA) provides a ligand contact to ATP. The active site involves Asp-186.

It belongs to the GHMP kinase family. IspE subfamily.

The enzyme catalyses 4-CDP-2-C-methyl-D-erythritol + ATP = 4-CDP-2-C-methyl-D-erythritol 2-phosphate + ADP + H(+). Its pathway is isoprenoid biosynthesis; isopentenyl diphosphate biosynthesis via DXP pathway; isopentenyl diphosphate from 1-deoxy-D-xylulose 5-phosphate: step 3/6. Catalyzes the phosphorylation of the position 2 hydroxy group of 4-diphosphocytidyl-2C-methyl-D-erythritol. This Corynebacterium jeikeium (strain K411) protein is 4-diphosphocytidyl-2-C-methyl-D-erythritol kinase.